The chain runs to 175 residues: Anterior gradient protein 2 homolog (175 aa).

The signal sequence occupies residues 1–20; the sequence is MEKIPVSAFLLLVALSYTLA. Residues 21-40 are required to promote cell adhesion; sequence RDTTVKPGAKKDTKDSRPKL. 2 consecutive short sequence motifs (homodimer stabilization; interchain) follow at residues 45-54 and 60-67; these read SRGWGDQLIW and EALYKSKT.

The protein belongs to the AGR family. In terms of assembly, monomer and homodimer. Interacts with LYPD3 and DAG1 (alphaDAG1). Interacts with MUC2; disulfide-linked. In terms of tissue distribution, expressed strongly in trachea, lung, stomach, colon, prostate and small intestine. Expressed weakly in pituitary gland, salivary gland, mammary gland, bladder, appendix, ovary, fetal lung, uterus, pancreas, kidney, fetal kidney, testis, placenta, thyroid gland and in estrogen receptor (ER)-positive breast cancer cell lines.

It is found in the secreted. Its subcellular location is the endoplasmic reticulum. Its function is as follows. Required for MUC2 post-transcriptional synthesis and secretion. May play a role in the production of mucus by intestinal cells. Proto-oncogene that may play a role in cell migration, cell differentiation and cell growth. Promotes cell adhesion. In Homo sapiens (Human), this protein is Anterior gradient protein 2 homolog (AGR2).